Reading from the N-terminus, the 303-residue chain is UDP-N-acetylenolpyruvoylglucosamine reductase (303 aa).

The FAD-binding PCMH-type domain maps to lysine 29 to lysine 196. The active site involves arginine 174. Serine 225 (proton donor) is an active-site residue. Glutamate 295 is a catalytic residue.

It belongs to the MurB family. It depends on FAD as a cofactor.

The protein resides in the cytoplasm. The catalysed reaction is UDP-N-acetyl-alpha-D-muramate + NADP(+) = UDP-N-acetyl-3-O-(1-carboxyvinyl)-alpha-D-glucosamine + NADPH + H(+). Its pathway is cell wall biogenesis; peptidoglycan biosynthesis. Its function is as follows. Cell wall formation. The polypeptide is UDP-N-acetylenolpyruvoylglucosamine reductase (Bacillus licheniformis (strain ATCC 14580 / DSM 13 / JCM 2505 / CCUG 7422 / NBRC 12200 / NCIMB 9375 / NCTC 10341 / NRRL NRS-1264 / Gibson 46)).